We begin with the raw amino-acid sequence, 112 residues long: Nucleoid-associated protein CV_1611 (112 aa).

Belongs to the YbaB/EbfC family. Homodimer.

Its subcellular location is the cytoplasm. The protein resides in the nucleoid. In terms of biological role, binds to DNA and alters its conformation. May be involved in regulation of gene expression, nucleoid organization and DNA protection. This Chromobacterium violaceum (strain ATCC 12472 / DSM 30191 / JCM 1249 / CCUG 213 / NBRC 12614 / NCIMB 9131 / NCTC 9757 / MK) protein is Nucleoid-associated protein CV_1611.